Here is a 147-residue protein sequence, read N- to C-terminus: D-aminoacyl-tRNA deacylase (147 aa).

The short motif at Gly137–Pro138 is the Gly-cisPro motif, important for rejection of L-amino acids element.

It belongs to the DTD family. Homodimer.

It localises to the cytoplasm. The enzyme catalyses glycyl-tRNA(Ala) + H2O = tRNA(Ala) + glycine + H(+). It carries out the reaction a D-aminoacyl-tRNA + H2O = a tRNA + a D-alpha-amino acid + H(+). Its function is as follows. An aminoacyl-tRNA editing enzyme that deacylates mischarged D-aminoacyl-tRNAs. Also deacylates mischarged glycyl-tRNA(Ala), protecting cells against glycine mischarging by AlaRS. Acts via tRNA-based rather than protein-based catalysis; rejects L-amino acids rather than detecting D-amino acids in the active site. By recycling D-aminoacyl-tRNA to D-amino acids and free tRNA molecules, this enzyme counteracts the toxicity associated with the formation of D-aminoacyl-tRNA entities in vivo and helps enforce protein L-homochirality. The polypeptide is D-aminoacyl-tRNA deacylase (Acinetobacter baumannii (strain AYE)).